A 1816-amino-acid polypeptide reads, in one-letter code: MENIEKKLMLGDLLFPTKTFNVLSDFGADEPFLIDGDSLILYLFSTFNISSHKIKDKQLLSTDKCQSILFFHYFESFIANVLNRKTKFQIFFIDENQYFYKNNTLKLIRKICIDYYINNDKKNVLNNSNVQFTLIKSKWWEDFSSIESYLLENMFSFMLVLFPAQESFEKYYRVDIQEVFILKTMKFLDYVVEFNSISFEGSCIETIIYGKGTMFQRGYPYFCNKEFFKQIDSFYNNEFENFNSDKLSFKDQNQILFNQQQSENRDNEINLLISTMFNNDISNNLNRIYCIYLVLLESLSIRDRGFILPTCYKIDENVLNFLDNASYKNLLYLQQVSDSSSSSSNNNNNNNNNNNNNNENINLDYLDFKLFYQILIQIQIKLPKDLNELNNIFGEEIIIKSKLIWNNVKKDFGYDIGEFDNFELFSNFQDRNNNLNDIIQEMERRTKEINSIDNSIYLVENDFIRSVAPQAYEYLKPFQSENYPDAESTINTRFIDNYHFHSTRTIEPDAFSIKLKETTFKTKKHKQRAEDKSVGSFKKYADSLNDPRNILIINKLNPTKEELEKERIKKEKEDSKKSYKKQSSSSSSSSTTTTSTTTSSTIKPKSEIGKLLESRLNQDKKRYESELDDCKSIKSFLKFLNNLDLLTSLPELYLQYFDHLINFLVKQKEDLIEEKKRTILLERKQQSKTKTHIELSEYEEKEIETSLELGIKEKSQFYQMIQKYLRSFITEKSKILSTKLQIDFANRFYTISKSLIGLSDLSNFINDHWKLKLPKLDESDVGNQQLKNSIEFQLKHSPDTLIRNTGSVEDSRVRHFKPDAWQVELLDIVDKRESALICASTSSGKTFISFYCFEQILKESNDGIVVFVCPTKALVNQMYAEVLGRYDKNYQAINHRPSNHKMVGVFTRDFRLNIETCQILITVPQCLEILFLSIMNTHFIQRCRYIIFDEVHQIASSVDGAIWERLLVFNPAPFLALSATLGNLTDFHNFLKKIDPNRKVSLIHYQSRFNDLKNFFLCQTPAKDNKSFPTYTIEPLHPMATLDQKKTGLSDISPDLKLIAGEAIQMYQVLKEKLGYEKVNHLDPVKFFANIPNKQFNLEKQHIEIYQAELKQFYTNLPSMTEKQLVVKALTSPKYNDSLKFDWASEITNIVLELQKQDLLPALFFSFNRSLCSRLAQRVYNDITHRNTNPNIIEEKKQLDLVIERFQKSLGRALADLEPNDPEKMELERLKAKRASLDYLKPQFGNLLSSDIDEKVKKDPLAPALTQGIAAHHGGCDKNYLRNVEYLFRSKKIQVVFATSTLAVGVNAPAKSSVFLGDSPYLNVLTSKQCAGRAGRRGFDNYGNVIFVGLPKQKINRLLNSRLSNIIGNSVVSPSLCLSLVSRYDYSTNGSANKSNEENKVQVKENEKEREKEKEKEKEKEKEKETIADNWDDDDDKKEITVADNWDDDEEETAESTKTTPATTPTTTTTENTPATTTTTKTPTTTSLKKLSSEDILDVQILKKSTKSLLNNSFFLGNPLQVQFQFLFSIDYLYRETYLSKDCVPMDNFSGIVTHLSYLEPFNFTFVSLLKGGVFDNLPTNQKDCDYFIIHILSYLFCVQNIPSIYVRSPSILILPPLPPTVHKIIKNHNDRLLKTFSTYLYVYKKYLKSTNDFLPFSSNDLKDSQKTTTTTTTATTSTITNKWNENFEKLKPSTENFNTGDLLSGIFKVSNLKKLKNILGSNTYFSTRILPYCNVDGSPVNSYLLDFYKHSQKKPLIEDNKIKESDLWTLLKEFSLILKVIATALTRRNPDSPISLAFSGVAKRYIQKFSDNFDH.

Disordered regions lie at residues 338 to 357 and 562 to 605; these read DSSS…NNNN and ELEK…IKPK. A compositionally biased stretch (low complexity) spans 339-357; it reads SSSSSSNNNNNNNNNNNNN. Residues 562–577 are compositionally biased toward basic and acidic residues; that stretch reads ELEKERIKKEKEDSKK. The segment covering 581-603 has biased composition (low complexity); that stretch reads KQSSSSSSSSTTTTSTTTSSTIK. In terms of domain architecture, Helicase ATP-binding spans 826-999; sequence LDIVDKRESA…FLKKIDPNRK (174 aa). 839-846 lines the ATP pocket; sequence ASTSSGKT. The short motif at 949 to 952 is the DEAH box element; the sequence is DEVH. The Helicase C-terminal domain occupies 1198–1379; the sequence is QLDLVIERFQ…SVVSPSLCLS (182 aa). The tract at residues 1388–1487 is disordered; the sequence is TNGSANKSNE…TTTKTPTTTS (100 aa). Over residues 1395–1427 the composition is skewed to basic and acidic residues; sequence SNEENKVQVKENEKEREKEKEKEKEKEKEKETI. Over residues 1445–1454 the composition is skewed to acidic residues; the sequence is NWDDDEEETA. Residues 1456–1487 show a composition bias toward low complexity; that stretch reads STKTTPATTPTTTTTENTPATTTTTKTPTTTS.

It belongs to the helicase family. SKI2 subfamily.

It is found in the nucleus. This is an uncharacterized protein from Dictyostelium discoideum (Social amoeba).